The chain runs to 160 residues: uncharacterized protein (160 aa).

It to A.fulgidus AF1717.

This is an uncharacterized protein from Bacillus subtilis (strain 168).